A 280-amino-acid polypeptide reads, in one-letter code: uncharacterized protein (280 aa).

The next 3 helical transmembrane spans lie at 10–29, 164–186, and 209–228; these read IQQNGILTAVITGIVALLFN, FVFVRWFKETLAFFVGASAFAFI, and IFGLSCSALYIFWIIHYFLL.

It is found in the cell membrane. This is an uncharacterized protein from Bacillus subtilis (strain 168).